The chain runs to 365 residues: Peptide chain release factor 2 (365 aa).

Position 252 is an N5-methylglutamine (glutamine 252).

This sequence belongs to the prokaryotic/mitochondrial release factor family. Post-translationally, methylated by PrmC. Methylation increases the termination efficiency of RF2.

The protein localises to the cytoplasm. In terms of biological role, peptide chain release factor 2 directs the termination of translation in response to the peptide chain termination codons UGA and UAA. The polypeptide is Peptide chain release factor 2 (Proteus mirabilis (strain HI4320)).